Consider the following 903-residue polypeptide: Calcium-activated chloride channel regulator 1 (903 aa).

Residues 1-21 form the signal peptide; the sequence is MVPRLTVILFLTLHLLPGMKS. Positions 45 to 199 are metalloprotease domain; sequence DEKLIQNIKE…HITGTNVIVK (155 aa). His-155 contacts Zn(2+). The active site involves Glu-156. His-159 and Asp-166 together coordinate Zn(2+). The region spanning 308 to 476 is the VWFA domain; that stretch reads VVCLVLDKSG…NGLTNAFSRI (169 aa). N-linked (GlcNAc...) asparagine glycosylation is found at Asn-360, Asn-372, Asn-504, and Asn-842. Residues 883-903 traverse the membrane as a helical segment; the sequence is GTKISAINLAIFALAMILSIV.

Belongs to the CLCR family. Post-translationally, glycosylated. In terms of processing, the 125-kDa product is autoproteolytically processed by the metalloprotease domain and yields to two cell-surface-associated subunits, a 90-kDa protein and a group of 37- to 41-kDa proteins. The cleavage is necessary for calcium-activated chloride channel (CaCC) activation activity. In terms of tissue distribution, trachea.

The protein resides in the apical cell membrane. In terms of biological role, may be involved in mediating calcium-activated chloride conductance. May play critical roles in goblet cell metaplasia, mucus hypersecretion, cystic fibrosis and AHR. May be involved in the regulation of mucus production and/or secretion by goblet cells. Involved in the regulation of tissue inflammation in the innate immune response. May play a role as a tumor suppressor. Induces MUC5AC. This is Calcium-activated chloride channel regulator 1 from Bos taurus (Bovine).